A 779-amino-acid chain; its full sequence is FAD-dependent monooxygenase BOA8 (779 aa).

FAD is bound by residues E85, R128, D331, and A344. The next 7 membrane-spanning stretches (helical) occupy residues 471–491 (AQLA…KTPE), 504–524 (VKLD…IWTI), 542–562 (AFLL…YFFF), 587–607 (ILPL…WSSI), 618–638 (NAWY…KFIV), 665–685 (ILIC…SIAF), and 742–762 (LILT…GLIV).

It belongs to the paxM FAD-dependent monooxygenase family. FAD serves as cofactor.

Its subcellular location is the membrane. It participates in polyketide biosynthesis. In terms of biological role, FAD-dependent monooxygenase; part of the gene cluster B that mediates the biosynthesis of botcinic acid and its botcinin derivatives, acetate-derived polyketides that contribute to virulence when combined with the sesquiterpene botrydial. Botcinic acid and its derivatives have been shown to induce chlorosis and necrosis during host plant infection, but also have antifungal activities. Two polyketide synthases, BOA6 and BOA9, are involved in the biosynthesis of botcinins. BOA6 mediates the formation of the per-methylated tetraketide core by condensation of four units of malonyl-CoA with one unit of acetyl-CoA, which would be methylated in activated methylene groups to yield a bicyclic acid intermediate that could then either be converted to botrylactone derivatives or lose the starter acetate unit through a retro-Claisen type C-C bond cleavage to yield botcinin derivatives. The second polyketide synthase, BOA9, is probably required for the biosynthesis of the tetraketide side chain of botcinins. The methyltransferase (MT) domain within BOA6 is probably responsible for the incorporation of four methyl groups. The trans-enoyl reductase BOA5 might take over the enoyl reductase function of BOA6 that misses an ER domain. The monooxygenases BOA2, BOA3 and BOA4 might be involved in further hydroxylations at C4, C5 and C8, whereas BOA7, close to BOA9, could potentially be involved in the hydroxylation at C4 in the side chain of botcinins. This is FAD-dependent monooxygenase BOA8 from Botryotinia fuckeliana (strain B05.10) (Noble rot fungus).